The following is a 605-amino-acid chain: Protein ZRG17 (605 aa).

Residues 1 to 225 (METPQMNAIQ…DLLSNLPWPK (225 aa)) are Cytoplasmic-facing. Phosphoserine occurs at positions 16 and 131. The disordered stretch occupies residues 118–178 (PAPKLVPPPP…PSSAASRTSF (61 aa)). The span at 143–176 (SKRSSMTLDSPFNFTTSTLQPHQQTPPSSAASRT) shows a compositional bias: polar residues. The chain crosses the membrane as a helical span at residues 226–246 (AYIQLSIAALQIFACLITFQV). The Lumenal portion of the chain corresponds to 247-254 (GHLYSWSN). The helical transmembrane segment at 255–275 (FITLSHFITYDIIGSLVIIFV) threads the bilayer. At 276-287 (ENLSQFQVWFTG) the chain is on the cytoplasmic side. The chain crosses the membrane as a helical span at residues 288-308 (TITFPFGLNRIDVLLSFALAV). Residue serine 309 is a topological domain, lumenal. Residues 310 to 330 (LCFVGLDLLFHIIEEFIVLFV) traverse the membrane as a helical segment. Over 331 to 363 (ESGSSLTNNHDHDEINEQIPHSHIANANDSQNE) the chain is Cytoplasmic. The chain crosses the membrane as a helical span at residues 364–384 (NITLWYSILMINLVLSTLSLY). At 385–399 (KTFYANKYSNLKTKN) the chain is on the lumenal side. A helical transmembrane segment spans residues 400-420 (PIITITYTAYLFIYPLLLDLL). Topologically, residues 421 to 422 (SS) are cytoplasmic. Residues 423 to 443 (ISDYLATLVISSLILWHGLTI) form a helical membrane-spanning segment. Over 444-545 (ARWTSTVLLM…ERLSEFKSRY (102 aa)) the chain is Lumenal. Polar residues predominate over residues 473 to 482 (DTTAHTQQVE). Residues 473–497 (DTTAHTQQVESKAAKEKPSVRPRSM) are disordered. Residue serine 498 is modified to Phosphoserine. A helical membrane pass occupies residues 546–566 (ILNYDDIVISKVNFTLYVVLI). Residues 567–605 (KITMKGGSDDDELMLRLAIDKCIQTSIPTCETTIDIDRI) are Cytoplasmic-facing.

The protein localises to the endoplasmic reticulum membrane. In Saccharomyces cerevisiae (strain ATCC 204508 / S288c) (Baker's yeast), this protein is Protein ZRG17 (ZRG17).